The chain runs to 30 residues: uncharacterized protein (30 aa).

A helical transmembrane segment spans residues tyrosine 9–phenylalanine 26.

The protein localises to the plastid. The protein resides in the chloroplast membrane. This is an uncharacterized protein from Marchantia polymorpha (Common liverwort).